We begin with the raw amino-acid sequence, 364 residues long: tRNA 2-selenouridine synthase (364 aa).

One can recognise a Rhodanese domain in the interval 14–137 (LLADTPLIDV…LRQTAIQATW (124 aa)). Cys97 functions as the S-selanylcysteine intermediate in the catalytic mechanism.

This sequence belongs to the SelU family. Monomer.

It catalyses the reaction 5-methylaminomethyl-2-thiouridine(34) in tRNA + selenophosphate + (2E)-geranyl diphosphate + H2O + H(+) = 5-methylaminomethyl-2-selenouridine(34) in tRNA + (2E)-thiogeraniol + phosphate + diphosphate. The enzyme catalyses 5-methylaminomethyl-2-thiouridine(34) in tRNA + (2E)-geranyl diphosphate = 5-methylaminomethyl-S-(2E)-geranyl-thiouridine(34) in tRNA + diphosphate. It carries out the reaction 5-methylaminomethyl-S-(2E)-geranyl-thiouridine(34) in tRNA + selenophosphate + H(+) = 5-methylaminomethyl-2-(Se-phospho)selenouridine(34) in tRNA + (2E)-thiogeraniol. The catalysed reaction is 5-methylaminomethyl-2-(Se-phospho)selenouridine(34) in tRNA + H2O = 5-methylaminomethyl-2-selenouridine(34) in tRNA + phosphate. Involved in the post-transcriptional modification of the uridine at the wobble position (U34) of tRNA(Lys), tRNA(Glu) and tRNA(Gln). Catalyzes the conversion of 2-thiouridine (S2U-RNA) to 2-selenouridine (Se2U-RNA). Acts in a two-step process involving geranylation of 2-thiouridine (S2U) to S-geranyl-2-thiouridine (geS2U) and subsequent selenation of the latter derivative to 2-selenouridine (Se2U) in the tRNA chain. The polypeptide is tRNA 2-selenouridine synthase (Salmonella paratyphi B (strain ATCC BAA-1250 / SPB7)).